The following is a 365-amino-acid chain: Eukaryotic translation initiation factor 3 subunit H (365 aa).

In terms of domain architecture, MPN spans 11–160; sequence VKVDALVVMK…LRAFRLSSKF (150 aa).

This sequence belongs to the eIF-3 subunit H family. In terms of assembly, component of the eukaryotic translation initiation factor 3 (eIF-3) complex.

It is found in the cytoplasm. Its function is as follows. Component of the eukaryotic translation initiation factor 3 (eIF-3) complex, which is involved in protein synthesis of a specialized repertoire of mRNAs and, together with other initiation factors, stimulates binding of mRNA and methionyl-tRNAi to the 40S ribosome. The eIF-3 complex specifically targets and initiates translation of a subset of mRNAs involved in cell proliferation. The polypeptide is Eukaryotic translation initiation factor 3 subunit H (Aspergillus oryzae (strain ATCC 42149 / RIB 40) (Yellow koji mold)).